The sequence spans 645 residues: 1-deoxy-D-xylulose-5-phosphate synthase 1 (645 aa).

Thiamine diphosphate contacts are provided by residues His79 and 120-122 (GHS). Residue Asp151 coordinates Mg(2+). Residues 152–153 (GS), Asn180, Tyr291, and Glu373 contribute to the thiamine diphosphate site. Asn180 lines the Mg(2+) pocket.

It belongs to the transketolase family. DXPS subfamily. As to quaternary structure, homodimer. It depends on Mg(2+) as a cofactor. Thiamine diphosphate serves as cofactor.

It catalyses the reaction D-glyceraldehyde 3-phosphate + pyruvate + H(+) = 1-deoxy-D-xylulose 5-phosphate + CO2. The protein operates within metabolic intermediate biosynthesis; 1-deoxy-D-xylulose 5-phosphate biosynthesis; 1-deoxy-D-xylulose 5-phosphate from D-glyceraldehyde 3-phosphate and pyruvate: step 1/1. Its function is as follows. Catalyzes the acyloin condensation reaction between C atoms 2 and 3 of pyruvate and glyceraldehyde 3-phosphate to yield 1-deoxy-D-xylulose-5-phosphate (DXP). This Rhodospirillum rubrum (strain ATCC 11170 / ATH 1.1.1 / DSM 467 / LMG 4362 / NCIMB 8255 / S1) protein is 1-deoxy-D-xylulose-5-phosphate synthase 1.